The following is a 552-amino-acid chain: Phosphoglucomutase (552 aa).

S143 functions as the Phosphoserine intermediate in the catalytic mechanism. The Mg(2+) site is built by S143, D295, D297, and D299.

It belongs to the phosphohexose mutase family. Mg(2+) is required as a cofactor.

The catalysed reaction is alpha-D-glucose 1-phosphate = alpha-D-glucose 6-phosphate. The protein operates within glycolipid metabolism; diglucosyl-diacylglycerol biosynthesis. Its function is as follows. Catalyzes the interconversion between glucose-6-phosphate and alpha-glucose-1-phosphate. This is the first step in the biosynthesis of diglucosyl-diacylglycerol (Glc2-DAG), i.e. the predominant glycolipid found in the S.aureus membrane, which is also used as a membrane anchor for lipoteichoic acid (LTA). The sequence is that of Phosphoglucomutase (pgcA) from Staphylococcus aureus (strain MSSA476).